The chain runs to 308 residues: Transcription initiation factor IIB (308 aa).

2 tandem repeats follow at residues Asn-124–Leu-207 and Asp-218–Gln-299.

This sequence belongs to the TFIIB family.

Stabilizes TBP binding to an archaeal box-A promoter. Also responsible for recruiting RNA polymerase II to the pre-initiation complex (DNA-TBP-TFIIB). This is Transcription initiation factor IIB from Sulfurisphaera tokodaii (strain DSM 16993 / JCM 10545 / NBRC 100140 / 7) (Sulfolobus tokodaii).